Reading from the N-terminus, the 248-residue chain is Ubiquinone biosynthesis O-methyltransferase (248 aa).

Arginine 41, glycine 72, aspartate 93, and methionine 136 together coordinate S-adenosyl-L-methionine.

It belongs to the methyltransferase superfamily. UbiG/COQ3 family.

It carries out the reaction a 3-demethylubiquinol + S-adenosyl-L-methionine = a ubiquinol + S-adenosyl-L-homocysteine + H(+). The enzyme catalyses a 3-(all-trans-polyprenyl)benzene-1,2-diol + S-adenosyl-L-methionine = a 2-methoxy-6-(all-trans-polyprenyl)phenol + S-adenosyl-L-homocysteine + H(+). It participates in cofactor biosynthesis; ubiquinone biosynthesis. Its function is as follows. O-methyltransferase that catalyzes the 2 O-methylation steps in the ubiquinone biosynthetic pathway. The chain is Ubiquinone biosynthesis O-methyltransferase from Brucella melitensis biotype 2 (strain ATCC 23457).